The chain runs to 293 residues: Membrane protein RL13 (293 aa).

Residues 1–19 form the signal peptide; sequence MHWHLAITWTVIILTFSEC. The chain crosses the membrane as a helical span at residues 245–265; sequence IPLGIHAVWAGIVVSVALIAL.

The protein resides in the virion membrane. Its function is as follows. May play a role in modifying tropism or in modulating cell signaling during virus entry. Since RL13 expression severely impairs HCMV replication in epithelial cell cultures, it may act as a regulator promoting persistence by suppressing the switch to fully lytic infection. The chain is Membrane protein RL13 (RL13) from Human cytomegalovirus (strain Merlin) (HHV-5).